The following is a 287-amino-acid chain: uncharacterized protein (287 aa).

7 consecutive transmembrane segments (helical) span residues 27-47, 66-86, 97-117, 135-155, 171-191, 205-225, and 254-274; these read LTFS…FGVQ, LGTI…VTAF, WFWG…GVLL, IVFA…LSAL, IFIW…VLNF, LFPG…VYFV, and SALF…YFIL.

The protein resides in the cell membrane. This is an uncharacterized protein from Mycoplasma pneumoniae (strain ATCC 29342 / M129 / Subtype 1) (Mycoplasmoides pneumoniae).